Reading from the N-terminus, the 513-residue chain is ATP synthase subunit alpha (513 aa).

An ATP-binding site is contributed by 169 to 176 (GDRQTGKT).

This sequence belongs to the ATPase alpha/beta chains family. F-type ATPases have 2 components, CF(1) - the catalytic core - and CF(0) - the membrane proton channel. CF(1) has five subunits: alpha(3), beta(3), gamma(1), delta(1), epsilon(1). CF(0) has three main subunits: a(1), b(2) and c(9-12). The alpha and beta chains form an alternating ring which encloses part of the gamma chain. CF(1) is attached to CF(0) by a central stalk formed by the gamma and epsilon chains, while a peripheral stalk is formed by the delta and b chains.

Its subcellular location is the cell inner membrane. The catalysed reaction is ATP + H2O + 4 H(+)(in) = ADP + phosphate + 5 H(+)(out). Functionally, produces ATP from ADP in the presence of a proton gradient across the membrane. The alpha chain is a regulatory subunit. This chain is ATP synthase subunit alpha, found in Yersinia enterocolitica serotype O:8 / biotype 1B (strain NCTC 13174 / 8081).